The following is a 518-amino-acid chain: Trigger factor (518 aa).

Residues 170–255 (GDVVVIDFVG…VKGLESPQEA (86 aa)) enclose the PPIase FKBP-type domain. The interval 447–518 (EAPAKPAKKA…AKKAAAKKDA (72 aa)) is disordered. Basic residues-rich tracts occupy residues 452–468 (PAKK…KKAA) and 501–518 (PAAK…KKDA).

The protein belongs to the FKBP-type PPIase family. Tig subfamily.

The protein resides in the cytoplasm. It carries out the reaction [protein]-peptidylproline (omega=180) = [protein]-peptidylproline (omega=0). Its function is as follows. Involved in protein export. Acts as a chaperone by maintaining the newly synthesized protein in an open conformation. Functions as a peptidyl-prolyl cis-trans isomerase. The protein is Trigger factor of Maricaulis maris (strain MCS10) (Caulobacter maris).